We begin with the raw amino-acid sequence, 205 residues long: Holliday junction branch migration complex subunit RuvA (205 aa).

The domain I stretch occupies residues 1–64 (MIGKLKGVVD…EDQIRLFGFS (64 aa)). Positions 65–143 (SAAERDWFRL…GFSASEPLAA (79 aa)) are domain II. A flexible linker region spans residues 144 to 152 (QLGGGGVAS). Residues 153-205 (AQGGAAADAVSALVNLGYGVPQANAAIAAALRGAGEGAKTEVLIRLGLKELAK) are domain III.

It belongs to the RuvA family. As to quaternary structure, homotetramer. Forms an RuvA(8)-RuvB(12)-Holliday junction (HJ) complex. HJ DNA is sandwiched between 2 RuvA tetramers; dsDNA enters through RuvA and exits via RuvB. An RuvB hexamer assembles on each DNA strand where it exits the tetramer. Each RuvB hexamer is contacted by two RuvA subunits (via domain III) on 2 adjacent RuvB subunits; this complex drives branch migration. In the full resolvosome a probable DNA-RuvA(4)-RuvB(12)-RuvC(2) complex forms which resolves the HJ.

The protein localises to the cytoplasm. Its function is as follows. The RuvA-RuvB-RuvC complex processes Holliday junction (HJ) DNA during genetic recombination and DNA repair, while the RuvA-RuvB complex plays an important role in the rescue of blocked DNA replication forks via replication fork reversal (RFR). RuvA specifically binds to HJ cruciform DNA, conferring on it an open structure. The RuvB hexamer acts as an ATP-dependent pump, pulling dsDNA into and through the RuvAB complex. HJ branch migration allows RuvC to scan DNA until it finds its consensus sequence, where it cleaves and resolves the cruciform DNA. This Xanthobacter autotrophicus (strain ATCC BAA-1158 / Py2) protein is Holliday junction branch migration complex subunit RuvA.